Here is a 612-residue protein sequence, read N- to C-terminus: BTB/POZ domain-containing protein 9 (612 aa).

The BTB domain maps to 36-104; it reads GDVTFVVEKK…IYTGRATLTD (69 aa). The region spanning 142 to 240 is the BACK domain; it reads VCMTFDVASL…SLTELLNVVR (99 aa). Residues 559-612 are disordered; it reads QQSNQKEDSSEEPGTGDPSTPNQQLDPHAPRAPSASSLPPSPGPNSRSPNQQNQ. Positions 589 to 612 are enriched in low complexity; sequence RAPSASSLPPSPGPNSRSPNQQNQ.

In terms of tissue distribution, expressed in the brain (at protein level).

This is BTB/POZ domain-containing protein 9 (Btbd9) from Mus musculus (Mouse).